The primary structure comprises 545 residues: Hyaluronidase PH-20 (545 aa).

The first 35 residues, methionine 1 to threonine 35, serve as a signal peptide directing secretion. Cystine bridges form between cysteine 60–cysteine 355 and cysteine 224–cysteine 239. N-linked (GlcNAc...) asparagine glycosylation is present at asparagine 82. The Proton donor role is filled by glutamate 148. Asparagine 180 carries an N-linked (GlcNAc...) asparagine glycan. N-linked (GlcNAc...) asparagine glycosylation occurs at asparagine 372. Disulfide bonds link cysteine 380-cysteine 391, cysteine 385-cysteine 439, and cysteine 441-cysteine 468.

Belongs to the glycosyl hydrolase 56 family. Testis.

The protein localises to the cell membrane. It carries out the reaction Random hydrolysis of (1-&gt;4)-linkages between N-acetyl-beta-D-glucosamine and D-glucuronate residues in hyaluronate.. Functionally, involved in sperm-egg adhesion. Upon fertilization sperm must first penetrate a layer of cumulus cells that surrounds the egg before reaching the zona pellucida. The cumulus cells are embedded in a matrix containing hyaluronic acid which is formed prior to ovulation. This protein aids in penetrating the layer of cumulus cells by digesting hyaluronic acid. This chain is Hyaluronidase PH-20 (SPAM1), found in Oryctolagus cuniculus (Rabbit).